Here is a 69-residue protein sequence, read N- to C-terminus: uncharacterized protein (69 aa).

At Met-1–Lys-15 the chain is on the cytoplasmic side. Residues Leu-16 to Tyr-36 form a helical membrane-spanning segment. Over Met-37–Tyr-69 the chain is Extracellular. Asn-51 carries an N-linked (GlcNAc...) asparagine; by host glycan.

Belongs to the asfivirus X69R family.

The protein localises to the host membrane. This is an uncharacterized protein from Ornithodoros (relapsing fever ticks).